The primary structure comprises 162 residues: Photosystem II extrinsic protein V (162 aa).

Positions 1–26 (MLKRYMLLAVATVFFAFQVLTSTATA) are cleaved as a signal peptide. Heme c-binding residues include Cys62, Cys65, His66, and His117.

It belongs to the cytochrome c family. PsbV subfamily. In terms of assembly, PSII is composed of 1 copy each of membrane proteins PsbA, PsbB, PsbC, PsbD, PsbE, PsbF, PsbH, PsbI, PsbJ, PsbK, PsbL, PsbM, PsbT, PsbX, PsbY, PsbZ, Psb30/Ycf12, peripheral proteins PsbO, CyanoQ (PsbQ), PsbU, PsbV and a large number of cofactors. It forms dimeric complexes. Requires heme c as cofactor.

Its subcellular location is the cellular thylakoid membrane. One of the extrinsic, lumenal subunits of photosystem II (PSII). PSII is a light-driven water plastoquinone oxidoreductase, using light energy to abstract electrons from H(2)O, generating a proton gradient subsequently used for ATP formation. The extrinsic proteins stabilize the structure of photosystem II oxygen-evolving complex (OEC), the ion environment of oxygen evolution and protect the OEC against heat-induced inactivation. Low-potential cytochrome c that plays a role in the OEC of PSII. The chain is Photosystem II extrinsic protein V from Acaryochloris marina (strain MBIC 11017).